The sequence spans 319 residues: Tetrahydromethanopterin S-methyltransferase subunit H (319 aa).

It belongs to the MtrH family. The complex is composed of 8 subunits; MtrA, MtrB, MtrC, MtrD, MtrE, MtrF, MtrG and MtrH.

The catalysed reaction is 5-methyl-5,6,7,8-tetrahydromethanopterin + coenzyme M + 2 Na(+)(in) = 5,6,7,8-tetrahydromethanopterin + methyl-coenzyme M + 2 Na(+)(out). Its pathway is one-carbon metabolism; methanogenesis from CO(2); methyl-coenzyme M from 5,10-methylene-5,6,7,8-tetrahydromethanopterin: step 2/2. Part of a complex that catalyzes the formation of methyl-coenzyme M and tetrahydromethanopterin from coenzyme M and methyl-tetrahydromethanopterin. This is an energy-conserving, sodium-ion translocating step. MtrH catalyzes the transfer of the methyl group from methyl-tetrahydromethanopterin to the corrinoid prosthetic group of MtrA. The protein is Tetrahydromethanopterin S-methyltransferase subunit H of Methanocaldococcus jannaschii (strain ATCC 43067 / DSM 2661 / JAL-1 / JCM 10045 / NBRC 100440) (Methanococcus jannaschii).